Here is a 947-residue protein sequence, read N- to C-terminus: Valine--tRNA ligase (947 aa).

The 'HIGH' region motif lies at 45 to 55 (PNVTGSLHMGH). The 'KMSKS' region signature appears at 591–595 (KMSKS). Lys594 is an ATP binding site.

It belongs to the class-I aminoacyl-tRNA synthetase family. ValS type 1 subfamily. Monomer.

It localises to the cytoplasm. The enzyme catalyses tRNA(Val) + L-valine + ATP = L-valyl-tRNA(Val) + AMP + diphosphate. Its function is as follows. Catalyzes the attachment of valine to tRNA(Val). As ValRS can inadvertently accommodate and process structurally similar amino acids such as threonine, to avoid such errors, it has a 'posttransfer' editing activity that hydrolyzes mischarged Thr-tRNA(Val) in a tRNA-dependent manner. The sequence is that of Valine--tRNA ligase from Rhizobium meliloti (strain 1021) (Ensifer meliloti).